The sequence spans 301 residues: Syntaxin-17 (301 aa).

N-acetylserine is present on Ser2. The Cytoplasmic segment spans residues 2–227; it reads SEDEEKVKLR…KNLQKAAKYK (226 aa). Lys41 bears the N6-acetyllysine mark. Positions 49 to 128 form a coiled coil; it reads DKLHEEHINA…QVNDEELLQP (80 aa). At Tyr156 the chain carries Phosphotyrosine; by ABL1. Residues 161 to 223 form the t-SNARE coiled-coil homology domain; that stretch reads IPQDQNAAES…EEGTKNLQKA (63 aa). A helical membrane pass occupies residues 228–248; that stretch reads LAALPVAGALIGGVVGGPIGL. The interval 228 to 274 is necessary and sufficient for localization to autophagosome; sequence LAALPVAGALIGGVVGGPIGLLAGFKVAGIAAALGGGVLGFTGGKLI. At 249-253 the chain is on the lumenal side; that stretch reads LAGFK. A helical membrane pass occupies residues 254–274; the sequence is VAGIAAALGGGVLGFTGGKLI. The Cytoplasmic segment spans residues 275–301; that stretch reads QRRKQKMMEKLTSSCPDLPSQSDKKRS. Ser288 is modified (phosphoserine). The short motif at 298–301 is the Endoplasmic reticulum retention signal element; that stretch reads KKRS.

The protein belongs to the syntaxin family. In terms of assembly, forms a SNARE complex composed of VAMP8, SNAP29 and STX17 involved in fusion of autophagosome with lysosome. May interact with VTI1B. Probably interacts with BET1, SCFD1 and SEC22B. Interacts with PTPN2 and ABL1; involved in STX17 phosphorylation. Interacts with COPB1. Interacts with TMED9 and TMED10; the interaction is direct. Interacts with VAMP7. Interacts with RUBCNL/PACER; promoting targeting of RUBCNL/PACER to autophagosome. Interacts with VAMP8, SNAP29, VPS39 and VPS41; these interactions are increased in the absence of TMEM39A. Interacts with IRGM; promoting STX17 recruitment to autophagosomes. Interacts with ATG8 proteins GABARAP and MAP1LC3B. Interacts with RNF115; this interaction enhances STX17 stability which in turn promotes autophagosome maturation. Interacts with RAB39A (GTP-bound); the interaction promotes autophagosome-lysosome membrane fusion driven by STX17-SNAP29-VAMP8. Interacts with RAB39B; the interaction may promote a different fonction in autophagy as compared with RAB39A. Post-translationally, dephosphorylation by PTPN2; regulates exit from the endoplasmic reticulum. Phosphorylated at Tyr-156 probably by ABL1.

The protein resides in the endoplasmic reticulum membrane. The protein localises to the smooth endoplasmic reticulum membrane. Its subcellular location is the endoplasmic reticulum-Golgi intermediate compartment membrane. It localises to the cytoplasmic vesicle. It is found in the autophagosome membrane. The protein resides in the COPII-coated vesicle membrane. The protein localises to the cytoplasm. Its subcellular location is the cytosol. It localises to the mitochondrion membrane. It is found in the autolysosome membrane. Its function is as follows. SNAREs, soluble N-ethylmaleimide-sensitive factor-attachment protein receptors, are essential proteins for fusion of cellular membranes. SNAREs localized on opposing membranes assemble to form a trans-SNARE complex, an extended, parallel four alpha-helical bundle that drives membrane fusion. STX17 is a SNARE of the autophagosome involved in autophagy through the direct control of autophagosome membrane fusion with the lysosome membrane. May also play a role in the early secretory pathway where it may maintain the architecture of the endoplasmic reticulum-Golgi intermediate compartment/ERGIC and Golgi and/or regulate transport between the endoplasmic reticulum, the ERGIC and the Golgi. The sequence is that of Syntaxin-17 from Mus musculus (Mouse).